A 91-amino-acid chain; its full sequence is Small ribosomal subunit protein uS19 (91 aa).

Belongs to the universal ribosomal protein uS19 family.

Functionally, protein S19 forms a complex with S13 that binds strongly to the 16S ribosomal RNA. This Pseudoalteromonas atlantica (strain T6c / ATCC BAA-1087) protein is Small ribosomal subunit protein uS19.